The chain runs to 103 residues: ATP synthase F(0) complex subunit g, mitochondrial (103 aa).

At alanine 2 the chain carries N-acetylalanine. Residues lysine 11, lysine 24, lysine 35, and lysine 54 each carry the N6-acetyllysine modification.

Belongs to the ATPase g subunit family. In terms of assembly, component of the ATP synthase complex composed at least of ATP5F1A/subunit alpha, ATP5F1B/subunit beta, ATP5MC1/subunit c (homooctomer), MT-ATP6/subunit a, MT-ATP8/subunit 8, ATP5ME/subunit e, ATP5MF/subunit f, ATP5MG/subunit g, ATP5MK/subunit k, ATP5MJ/subunit j, ATP5F1C/subunit gamma, ATP5F1D/subunit delta, ATP5F1E/subunit epsilon, ATP5PF/subunit F6, ATP5PB/subunit b, ATP5PD/subunit d, ATP5PO/subunit OSCP. ATP synthase complex consists of a soluble F(1) head domain (subunits alpha(3) and beta(3)) - the catalytic core - and a membrane F(0) domain - the membrane proton channel (subunits c, a, 8, e, f, g, k and j). These two domains are linked by a central stalk (subunits gamma, delta, and epsilon) rotating inside the F1 region and a stationary peripheral stalk (subunits F6, b, d, and OSCP).

Its subcellular location is the mitochondrion. The protein localises to the mitochondrion inner membrane. Functionally, subunit g, of the mitochondrial membrane ATP synthase complex (F(1)F(0) ATP synthase or Complex V) that produces ATP from ADP in the presence of a proton gradient across the membrane which is generated by electron transport complexes of the respiratory chain. ATP synthase complex consist of a soluble F(1) head domain - the catalytic core - and a membrane F(1) domain - the membrane proton channel. These two domains are linked by a central stalk rotating inside the F(1) region and a stationary peripheral stalk. During catalysis, ATP synthesis in the catalytic domain of F(1) is coupled via a rotary mechanism of the central stalk subunits to proton translocation. In vivo, can only synthesize ATP although its ATP hydrolase activity can be activated artificially in vitro. Part of the complex F(0) domain. The polypeptide is ATP synthase F(0) complex subunit g, mitochondrial (Pongo abelii (Sumatran orangutan)).